We begin with the raw amino-acid sequence, 287 residues long: Ethylene-responsive transcription factor ERF116 (287 aa).

The segment at residues 80–140 is a DNA-binding region (AP2/ERF); sequence YPVGVRPRPS…ASSGSAVSSS (61 aa).

The protein belongs to the AP2/ERF transcription factor family. ERF subfamily.

The protein localises to the nucleus. In terms of biological role, probably acts as a transcriptional activator. Binds to the GCC-box pathogenesis-related promoter element. May be involved in the regulation of gene expression by stress factors and by components of stress signal transduction pathways. This Arabidopsis thaliana (Mouse-ear cress) protein is Ethylene-responsive transcription factor ERF116 (ERF116).